The following is a 667-amino-acid chain: Bifunctional polymyxin resistance protein ArnA (667 aa).

The tract at residues 1-304 (MKAIVFAYHD…EMGIVTDVRL (304 aa)) is formyltransferase ArnAFT. Histidine 104 acts as the Proton donor; for formyltransferase activity in catalysis. (6R)-10-formyltetrahydrofolate contacts are provided by residues arginine 114 and 136–140 (VKKAD). The interval 314–667 (RRTRVLILGV…TAAPKDELNA (354 aa)) is dehydrogenase ArnADH. NAD(+) is bound by residues aspartate 347 and 368 to 369 (DI). Residues alanine 393, tyrosine 398, and 432–433 (TS) each bind UDP-alpha-D-glucuronate. The active-site Proton acceptor; for decarboxylase activity is the glutamate 434. Residues arginine 460, asparagine 492, 526–535 (KLVDGGAQKR), and tyrosine 613 contribute to the UDP-alpha-D-glucuronate site. Arginine 619 acts as the Proton donor; for decarboxylase activity in catalysis.

This sequence in the N-terminal section; belongs to the Fmt family. UDP-L-Ara4N formyltransferase subfamily. In the C-terminal section; belongs to the NAD(P)-dependent epimerase/dehydratase family. UDP-glucuronic acid decarboxylase subfamily. In terms of assembly, homohexamer, formed by a dimer of trimers.

It catalyses the reaction UDP-alpha-D-glucuronate + NAD(+) = UDP-beta-L-threo-pentopyranos-4-ulose + CO2 + NADH. The enzyme catalyses UDP-4-amino-4-deoxy-beta-L-arabinose + (6R)-10-formyltetrahydrofolate = UDP-4-deoxy-4-formamido-beta-L-arabinose + (6S)-5,6,7,8-tetrahydrofolate + H(+). It functions in the pathway nucleotide-sugar biosynthesis; UDP-4-deoxy-4-formamido-beta-L-arabinose biosynthesis; UDP-4-deoxy-4-formamido-beta-L-arabinose from UDP-alpha-D-glucuronate: step 1/3. It participates in nucleotide-sugar biosynthesis; UDP-4-deoxy-4-formamido-beta-L-arabinose biosynthesis; UDP-4-deoxy-4-formamido-beta-L-arabinose from UDP-alpha-D-glucuronate: step 3/3. The protein operates within bacterial outer membrane biogenesis; lipopolysaccharide biosynthesis. Functionally, bifunctional enzyme that catalyzes the oxidative decarboxylation of UDP-glucuronic acid (UDP-GlcUA) to UDP-4-keto-arabinose (UDP-Ara4O) and the addition of a formyl group to UDP-4-amino-4-deoxy-L-arabinose (UDP-L-Ara4N) to form UDP-L-4-formamido-arabinose (UDP-L-Ara4FN). The modified arabinose is attached to lipid A and is required for resistance to polymyxin and cationic antimicrobial peptides. This is Bifunctional polymyxin resistance protein ArnA from Yersinia pestis bv. Antiqua (strain Antiqua).